Reading from the N-terminus, the 113-residue chain is UPF0060 membrane protein Mmcs_2513 (113 aa).

Helical transmembrane passes span 12–32, 37–57, 66–86, and 92–112; these read ALFVLAALLEIGGAWLVWQGV, GWIWAGAGVIALGAYGFVAAF, ILAAYGGVFVAGSLLWGVVVD, and RWDLTGALVCLVGVGLIMYAP.

This sequence belongs to the UPF0060 family.

The protein localises to the cell membrane. The chain is UPF0060 membrane protein Mmcs_2513 from Mycobacterium sp. (strain MCS).